Here is a 510-residue protein sequence, read N- to C-terminus: Bifunctional pantoate ligase/cytidylate kinase (510 aa).

The tract at residues 1–276 is pantoate--beta-alanine ligase; that stretch reads MNKIIIRKTE…CGKTRLIDHV (276 aa). Residue 29–36 coordinates ATP; the sequence is MGNLHDGH. The active-site Proton donor is the H36. Q61 serves as a coordination point for (R)-pantoate. Residue Q61 participates in beta-alanine binding. 150–153 contacts ATP; it reads GEKD. Q156 provides a ligand contact to (R)-pantoate. Residue 187–190 participates in ATP binding; sequence FSSR. The cytidylate kinase stretch occupies residues 277-510; that stretch reads FLMKRKPIIA…LNIPKEIQLE (234 aa).

The protein in the N-terminal section; belongs to the pantothenate synthetase family. This sequence in the C-terminal section; belongs to the cytidylate kinase family. Type 1 subfamily.

Its subcellular location is the cytoplasm. It catalyses the reaction (R)-pantoate + beta-alanine + ATP = (R)-pantothenate + AMP + diphosphate + H(+). The enzyme catalyses CMP + ATP = CDP + ADP. The catalysed reaction is dCMP + ATP = dCDP + ADP. Its pathway is cofactor biosynthesis; (R)-pantothenate biosynthesis; (R)-pantothenate from (R)-pantoate and beta-alanine: step 1/1. In terms of biological role, catalyzes the condensation of pantoate with beta-alanine in an ATP-dependent reaction via a pantoyl-adenylate intermediate. Functionally, catalyzes the transfer of a phosphate group from ATP to either CMP or dCMP to form CDP or dCDP and ADP, respectively. The sequence is that of Bifunctional pantoate ligase/cytidylate kinase from Prochlorococcus marinus subsp. pastoris (strain CCMP1986 / NIES-2087 / MED4).